Reading from the N-terminus, the 160-residue chain is Lipoprotein signal peptidase (160 aa).

3 helical membrane-spanning segments follow: residues 13–33 (IYIT…RLII), 72–92 (WFLS…ITKL), and 104–124 (SLII…GFVV). Catalysis depends on residues D125 and D143. Residues 134-154 (WHFATFNIADCSIFIGIIILM) form a helical membrane-spanning segment.

It belongs to the peptidase A8 family.

It is found in the cell inner membrane. The enzyme catalyses Release of signal peptides from bacterial membrane prolipoproteins. Hydrolyzes -Xaa-Yaa-Zaa-|-(S,diacylglyceryl)Cys-, in which Xaa is hydrophobic (preferably Leu), and Yaa (Ala or Ser) and Zaa (Gly or Ala) have small, neutral side chains.. The protein operates within protein modification; lipoprotein biosynthesis (signal peptide cleavage). Its function is as follows. This protein specifically catalyzes the removal of signal peptides from prolipoproteins. The sequence is that of Lipoprotein signal peptidase from Buchnera aphidicola subsp. Acyrthosiphon pisum (strain 5A).